Reading from the N-terminus, the 251-residue chain is Small ribosomal subunit protein uS3 (251 aa).

One can recognise a KH type-2 domain in the interval 39 to 111 (IRELINNFSK…DVDLNILEVK (73 aa)).

It belongs to the universal ribosomal protein uS3 family. As to quaternary structure, part of the 30S ribosomal subunit. Forms a tight complex with proteins S10 and S14.

Functionally, binds the lower part of the 30S subunit head. Binds mRNA in the 70S ribosome, positioning it for translation. The polypeptide is Small ribosomal subunit protein uS3 (Phytoplasma sp. (strain STRAWB1)).